We begin with the raw amino-acid sequence, 202 residues long: Orotate phosphoribosyltransferase (202 aa).

5-phospho-alpha-D-ribose 1-diphosphate is bound by residues K93 and 113–121 (EDIITTGGS). Orotate contacts are provided by T117 and R145.

It belongs to the purine/pyrimidine phosphoribosyltransferase family. PyrE subfamily. Homodimer. Mg(2+) is required as a cofactor.

It carries out the reaction orotidine 5'-phosphate + diphosphate = orotate + 5-phospho-alpha-D-ribose 1-diphosphate. It functions in the pathway pyrimidine metabolism; UMP biosynthesis via de novo pathway; UMP from orotate: step 1/2. Functionally, catalyzes the transfer of a ribosyl phosphate group from 5-phosphoribose 1-diphosphate to orotate, leading to the formation of orotidine monophosphate (OMP). This chain is Orotate phosphoribosyltransferase, found in Campylobacter jejuni subsp. jejuni serotype O:23/36 (strain 81-176).